Reading from the N-terminus, the 357-residue chain is S-adenosylmethionine:tRNA ribosyltransferase-isomerase (357 aa).

This sequence belongs to the QueA family. Monomer.

The protein localises to the cytoplasm. It carries out the reaction 7-aminomethyl-7-carbaguanosine(34) in tRNA + S-adenosyl-L-methionine = epoxyqueuosine(34) in tRNA + adenine + L-methionine + 2 H(+). It participates in tRNA modification; tRNA-queuosine biosynthesis. Functionally, transfers and isomerizes the ribose moiety from AdoMet to the 7-aminomethyl group of 7-deazaguanine (preQ1-tRNA) to give epoxyqueuosine (oQ-tRNA). The protein is S-adenosylmethionine:tRNA ribosyltransferase-isomerase of Buchnera aphidicola subsp. Schizaphis graminum (strain Sg).